Consider the following 117-residue polypeptide: Large ribosomal subunit protein uL24 (117 aa).

This sequence belongs to the universal ribosomal protein uL24 family. Part of the 50S ribosomal subunit.

One of two assembly initiator proteins, it binds directly to the 5'-end of the 23S rRNA, where it nucleates assembly of the 50S subunit. Its function is as follows. One of the proteins that surrounds the polypeptide exit tunnel on the outside of the subunit. The protein is Large ribosomal subunit protein uL24 of Nostoc punctiforme (strain ATCC 29133 / PCC 73102).